A 290-amino-acid chain; its full sequence is Signal recognition particle receptor FtsY (290 aa).

Residues Gly91 to Thr98, Asp173 to Arg177, and Thr237 to Asp240 each bind GTP.

The protein belongs to the GTP-binding SRP family. FtsY subfamily. As to quaternary structure, part of the signal recognition particle protein translocation system, which is composed of SRP and FtsY.

The protein localises to the cell inner membrane. It is found in the cytoplasm. The enzyme catalyses GTP + H2O = GDP + phosphate + H(+). Involved in targeting and insertion of nascent membrane proteins into the cytoplasmic membrane. Acts as a receptor for the complex formed by the signal recognition particle (SRP) and the ribosome-nascent chain (RNC). This chain is Signal recognition particle receptor FtsY, found in Chlamydia pneumoniae (Chlamydophila pneumoniae).